The sequence spans 547 residues: TBCC domain-containing protein 1 (547 aa).

In terms of domain architecture, C-CAP/cofactor C-like spans 304 to 435 (PHTHRMVVMS…LEDHMAHTGL (132 aa)).

Belongs to the TBCC family.

It is found in the cytoplasm. The protein localises to the cytoskeleton. Its subcellular location is the microtubule organizing center. The protein resides in the centrosome. It localises to the spindle pole. Functionally, may play a role in the regulation of centrosome and Golgi apparatus positioning. The chain is TBCC domain-containing protein 1 (tbccd1) from Xenopus tropicalis (Western clawed frog).